We begin with the raw amino-acid sequence, 438 residues long: GTPase Der (438 aa).

2 consecutive EngA-type G domains span residues 4 to 169 and 178 to 353; these read PVVA…PEKG and IDVA…DQNS. GTP is bound by residues 10-17, 57-61, 120-123, 184-191, 231-235, and 296-299; these read GRPNVGKS, DTGGI, NKVD, GKPNVGKS, DTAGL, and NKWD. The KH-like domain occupies 354 to 438; it reads RRVKTGLLNE…PIRLKFKQKT (85 aa).

The protein belongs to the TRAFAC class TrmE-Era-EngA-EngB-Septin-like GTPase superfamily. EngA (Der) GTPase family. Associates with the 50S ribosomal subunit.

In terms of biological role, GTPase that plays an essential role in the late steps of ribosome biogenesis. The polypeptide is GTPase Der (Halothermothrix orenii (strain H 168 / OCM 544 / DSM 9562)).